Here is a 462-residue protein sequence, read N- to C-terminus: UDP-N-acetylmuramoylalanine--D-glutamate ligase (462 aa).

120-126 is a binding site for ATP; the sequence is GTNGKTT.

The protein belongs to the MurCDEF family.

It is found in the cytoplasm. The catalysed reaction is UDP-N-acetyl-alpha-D-muramoyl-L-alanine + D-glutamate + ATP = UDP-N-acetyl-alpha-D-muramoyl-L-alanyl-D-glutamate + ADP + phosphate + H(+). It functions in the pathway cell wall biogenesis; peptidoglycan biosynthesis. Functionally, cell wall formation. Catalyzes the addition of glutamate to the nucleotide precursor UDP-N-acetylmuramoyl-L-alanine (UMA). In Bdellovibrio bacteriovorus (strain ATCC 15356 / DSM 50701 / NCIMB 9529 / HD100), this protein is UDP-N-acetylmuramoylalanine--D-glutamate ligase.